Consider the following 81-residue polypeptide: EC protein I/II (81 aa).

Belongs to the metallothionein superfamily. Type 15 family.

Its function is as follows. Binds 5 molecules of zinc. May have a role in Zn(2+) homeostasis during embryogenesis. The protein is EC protein I/II of Triticum aestivum (Wheat).